A 504-amino-acid chain; its full sequence is MDHYILEMQEITKQFPGVKALDKVDFKARKGEIHALCGENGAGKSTLMKVLSGVYPYGTYQGEILINGQPQKFYTIKDSERAGIAIIYQELALVSELSVAENIFLGNEPLHHHLIDWDKMYIEATKWLKEVGLDVSPGTKIKNLGVGQQQLVEIAKALAKNASILVLDEPTAALTEAEVEILMHILHQLKSKGVTCIYISHKLNEVFAIADNITVLRDGRTIGTVKKDETSQDKIITMMVGRELNRLFPYINHSPGAITLEVRNFSVYNPDNPRKKIVKDVNFYVRKGEVLGIAGLIGSGRTELVTSIYGGYPGKNEGEIWLDGRKIKIKNSEDALSNGIALVPEDRRRQGLVLDMDICKNITLASLKRSYNIMLNESAEIRDAEFFVDKLKIKSPSVEARVGNLSGGNQQKVVLGKALMTNPRVLILDEPTRGIDVGAKYEIYNLINSLVSQGVAIVMVSSELPEILGMSDRILVLCEGRITGEFSREEATEEKIMACATGGK.

ABC transporter domains follow at residues 6–243 and 262–504; these read LEMQ…VGRE and VRNF…TGGK. Residue 38 to 45 coordinates ATP; that stretch reads GENGAGKS.

This sequence belongs to the ABC transporter superfamily. Xylose importer (TC 3.A.1.2.4) family. As to quaternary structure, the complex is composed of two ATP-binding proteins (XylG), two transmembrane proteins (XylH) and a solute-binding protein (XylF).

Its subcellular location is the cell membrane. It catalyses the reaction D-xylose(out) + ATP + H2O = D-xylose(in) + ADP + phosphate + H(+). Part of the ABC transporter complex XylFGH involved in xylose import. Responsible for energy coupling to the transport system. The sequence is that of Xylose import ATP-binding protein XylG from Moorella thermoacetica (strain ATCC 39073 / JCM 9320).